Consider the following 281-residue polypeptide: MEMO1 family protein Pars_0062 (281 aa).

This sequence belongs to the MEMO1 family.

This is MEMO1 family protein Pars_0062 from Pyrobaculum arsenaticum (strain DSM 13514 / JCM 11321 / PZ6).